A 394-amino-acid chain; its full sequence is Mitogen-activated protein kinase 2 (394 aa).

The span at 1-10 shows a compositional bias: polar residues; it reads MDGPAQQTDT. Residues 1–27 form a disordered region; that stretch reads MDGPAQQTDTVMAEAAAAQQPAPPSQP. The Protein kinase domain maps to 61 to 346; sequence KPPIMPIGKG…VEDALAHPYL (286 aa). ATP is bound by residues 67 to 75 and Lys-90; that span reads IGKGAYGIV. Asp-187 serves as the catalytic Proton acceptor. Phosphothreonine is present on Thr-219. The short motif at 219 to 221 is the TXY element; that stretch reads TEY. Tyr-221 carries the phosphotyrosine modification. A Phosphothreonine modification is found at Thr-224.

It belongs to the protein kinase superfamily. CMGC Ser/Thr protein kinase family. MAP kinase subfamily. Mg(2+) is required as a cofactor. Post-translationally, activated by cold, wounding and UV-C in a cultivar-dependent manner; phosphorylated at Tyr-221 in cv. Subicho but not in cv. Pungchon. In terms of tissue distribution, expressed constitutively in roots, stems, flowers and fruits of the hot pepper (cv. Subicho).

The catalysed reaction is L-seryl-[protein] + ATP = O-phospho-L-seryl-[protein] + ADP + H(+). It carries out the reaction L-threonyl-[protein] + ATP = O-phospho-L-threonyl-[protein] + ADP + H(+). Its activity is regulated as follows. Activated by threonine and tyrosine phosphorylation. In terms of biological role, protein kinase involved in oxidative stress-mediated and innate immune MAP kinase signaling cascades. This is Mitogen-activated protein kinase 2 from Capsicum annuum (Capsicum pepper).